The sequence spans 196 residues: HTH-type transcriptional regulator BetI (196 aa).

One can recognise an HTH tetR-type domain in the interval Pro8–Leu68. Positions Thr31–Phe50 form a DNA-binding region, H-T-H motif.

Its pathway is amine and polyamine biosynthesis; betaine biosynthesis via choline pathway [regulation]. Its function is as follows. Repressor involved in the biosynthesis of the osmoprotectant glycine betaine. It represses transcription of the choline transporter BetT and the genes of BetAB involved in the synthesis of glycine betaine. The sequence is that of HTH-type transcriptional regulator BetI from Stenotrophomonas maltophilia (strain R551-3).